Reading from the N-terminus, the 303-residue chain is Quinolinate synthase (303 aa).

2 residues coordinate iminosuccinate: H25 and S42. C87 is a binding site for [4Fe-4S] cluster. Residues 113–115 and S130 contribute to the iminosuccinate site; that span reads YVN. Position 173 (C173) interacts with [4Fe-4S] cluster. Residues 199 to 201 and T216 each bind iminosuccinate; that span reads HPE. Residue C261 coordinates [4Fe-4S] cluster.

It belongs to the quinolinate synthase family. Type 2 subfamily. The cofactor is [4Fe-4S] cluster.

Its subcellular location is the cytoplasm. It catalyses the reaction iminosuccinate + dihydroxyacetone phosphate = quinolinate + phosphate + 2 H2O + H(+). It functions in the pathway cofactor biosynthesis; NAD(+) biosynthesis; quinolinate from iminoaspartate: step 1/1. Functionally, catalyzes the condensation of iminoaspartate with dihydroxyacetone phosphate to form quinolinate. The protein is Quinolinate synthase of Desulforudis audaxviator (strain MP104C).